We begin with the raw amino-acid sequence, 310 residues long: uncharacterized protein (310 aa).

5 helical membrane-spanning segments follow: residues 10 to 30, 44 to 64, 78 to 98, 113 to 133, and 161 to 181; these read AVLS…AYAI, TVNL…ATPA, FSSG…GYSA, LGIA…WILW, and VVVA…PLIA. Residues 285–297 show a composition bias toward basic and acidic residues; that stretch reads PLEDPKSWQHPDE. The interval 285–310 is disordered; sequence PLEDPKSWQHPDEFPPSAPLNRDKPN.

The protein belongs to the cation diffusion facilitator (CDF) transporter (TC 2.A.4) family.

It is found in the cell membrane. This is an uncharacterized protein from Synechocystis sp. (strain ATCC 27184 / PCC 6803 / Kazusa).